The sequence spans 129 residues: uncharacterized protein (129 aa).

The region spanning 3–109 (IFCKIINGEI…IPRYEGDGEV (107 aa)) is the HIT domain. The short motif at 94–98 (HVHFH) is the Histidine triad motif element.

This is an uncharacterized protein from Methanocaldococcus jannaschii (strain ATCC 43067 / DSM 2661 / JAL-1 / JCM 10045 / NBRC 100440) (Methanococcus jannaschii).